A 1187-amino-acid polypeptide reads, in one-letter code: DNA-directed RNA polymerase subunit beta (1187 aa).

This sequence belongs to the RNA polymerase beta chain family. The RNAP catalytic core consists of 2 alpha, 1 beta, 1 beta' and 1 omega subunit. When a sigma factor is associated with the core the holoenzyme is formed, which can initiate transcription.

It carries out the reaction RNA(n) + a ribonucleoside 5'-triphosphate = RNA(n+1) + diphosphate. In terms of biological role, DNA-dependent RNA polymerase catalyzes the transcription of DNA into RNA using the four ribonucleoside triphosphates as substrates. This chain is DNA-directed RNA polymerase subunit beta, found in Petrotoga mobilis (strain DSM 10674 / SJ95).